Consider the following 286-residue polypeptide: MSSERKAPHAAIGQVLIEALPYIRQFEGKTFVIKYGGAAMKDDTLKNMFAQNVTLLRKVGIRIVLVHGGGDAITRTAEKLGLQSRFVQGRRVTDKEMISVIQMTLAGKVNQDIVQLISEHGGKAVGVSGLDADTIKAHPHPNAEQLGLVGEVEQINTDYIDLLSQAGLIPVIAPVGFDCDGNLYNINADDAASSISIALKAEKLIYVSDVAGIQVGDKILKTISKAEAADLIERGIISGGMIPKVVSAFNTMDGGVGKVHLIDGKSTHSLLLEIFTHEGVGTQFIN.

Substrate contacts are provided by residues 69 to 70 (GG), arginine 91, and asparagine 185.

This sequence belongs to the acetylglutamate kinase family. ArgB subfamily.

It is found in the cytoplasm. It carries out the reaction N-acetyl-L-glutamate + ATP = N-acetyl-L-glutamyl 5-phosphate + ADP. The protein operates within amino-acid biosynthesis; L-arginine biosynthesis; N(2)-acetyl-L-ornithine from L-glutamate: step 2/4. Functionally, catalyzes the ATP-dependent phosphorylation of N-acetyl-L-glutamate. This Chlorobium chlorochromatii (strain CaD3) protein is Acetylglutamate kinase.